Consider the following 81-residue polypeptide: ATP synthase subunit c, chloroplastic (81 aa).

2 helical membrane-spanning segments follow: residues 4-24 (VISA…SIGP) and 57-77 (LAFM…LLFA).

Belongs to the ATPase C chain family. In terms of assembly, F-type ATPases have 2 components, F(1) - the catalytic core - and F(0) - the membrane proton channel. F(1) has five subunits: alpha(3), beta(3), gamma(1), delta(1), epsilon(1). F(0) has four main subunits: a(1), b(1), b'(1) and c(10-14). The alpha and beta chains form an alternating ring which encloses part of the gamma chain. F(1) is attached to F(0) by a central stalk formed by the gamma and epsilon chains, while a peripheral stalk is formed by the delta, b and b' chains.

Its subcellular location is the plastid. The protein localises to the chloroplast thylakoid membrane. Functionally, f(1)F(0) ATP synthase produces ATP from ADP in the presence of a proton or sodium gradient. F-type ATPases consist of two structural domains, F(1) containing the extramembraneous catalytic core and F(0) containing the membrane proton channel, linked together by a central stalk and a peripheral stalk. During catalysis, ATP synthesis in the catalytic domain of F(1) is coupled via a rotary mechanism of the central stalk subunits to proton translocation. Its function is as follows. Key component of the F(0) channel; it plays a direct role in translocation across the membrane. A homomeric c-ring of between 10-14 subunits forms the central stalk rotor element with the F(1) delta and epsilon subunits. The polypeptide is ATP synthase subunit c, chloroplastic (Zygnema circumcarinatum (Green alga)).